The primary structure comprises 285 residues: Polyamine aminopropyltransferase (285 aa).

In terms of domain architecture, PABS spans 2–237; that stretch reads DLWFSESHTP…GYWCFGFASK (236 aa). Gln-31 contacts S-methyl-5'-thioadenosine. Position 86 (Asp-86) interacts with spermidine. S-methyl-5'-thioadenosine-binding positions include Glu-106 and 137-138; that span reads DG. Catalysis depends on Asp-155, which acts as the Proton acceptor.

Belongs to the spermidine/spermine synthase family. Homodimer or homotetramer.

The protein resides in the cytoplasm. It catalyses the reaction S-adenosyl 3-(methylsulfanyl)propylamine + putrescine = S-methyl-5'-thioadenosine + spermidine + H(+). It functions in the pathway amine and polyamine biosynthesis; spermidine biosynthesis; spermidine from putrescine: step 1/1. Catalyzes the irreversible transfer of a propylamine group from the amino donor S-adenosylmethioninamine (decarboxy-AdoMet) to putrescine (1,4-diaminobutane) to yield spermidine. The sequence is that of Polyamine aminopropyltransferase from Streptococcus uberis (strain ATCC BAA-854 / 0140J).